The sequence spans 518 residues: MIPDVSQALAWLEKHPQALKGIQRGLERETLRVNADGTLATTGHPEALGSALTHKWITTDFAEALLEFITPVDGDIEHMLTFMRDLHRYTARNMGDERMWPLSMPCYIAEGQDIELAQYGTSNTGRFKTLYREGLKNRYGALMQTISGVHYNFSLPMAFWQAKCGDISGADAKEKISAGYFRVIRNYYRFGWVIPYLFGASPAICSSFLQGKPTSLPFEKTECGMYYLPYATSLRLSDLGYTNKSQSNLGITFNDLYEYVAGLKQAIKTPSEEYAKIGIEKDGKRLQINSNVLQIENELYAPIRPKRVTRSGESPSDALLRGGIEYIEVRSLDINPFSPIGVDEQQVRFLDLFMVWCALADAPEMSSSELACTRVNWNRVILEGRKPGLTLGIGCETAQFPLLQVGKDLFRDLKRVAQTLDSINGGEAYQKVCDELVACFDNPDLTFSARILRSMIDTGIGGTGKAFAEAYRNLLREEPLEILREEDFVAEREASERRQQEMETADTEPFAVWLEKHA.

This sequence belongs to the glutamate--cysteine ligase type 1 family. Type 1 subfamily.

It carries out the reaction L-cysteine + L-glutamate + ATP = gamma-L-glutamyl-L-cysteine + ADP + phosphate + H(+). It functions in the pathway sulfur metabolism; glutathione biosynthesis; glutathione from L-cysteine and L-glutamate: step 1/2. The chain is Glutamate--cysteine ligase from Shigella flexneri serotype 5b (strain 8401).